Consider the following 146-residue polypeptide: Hemoglobin subunit beta (146 aa).

The region spanning 2 to 146 (QWTAEEKQLI…VAHALARKYH (145 aa)) is the Globin domain. Heme b-binding residues include His-63 and His-92.

The protein belongs to the globin family. Heterotetramer of two alpha chains and two beta chains. Red blood cells.

In terms of biological role, involved in oxygen transport from the lung to the various peripheral tissues. The polypeptide is Hemoglobin subunit beta (HBB) (Turdus merula (Common blackbird)).